Consider the following 350-residue polypeptide: Phenylalanine--tRNA ligase alpha subunit (350 aa).

Glutamate 271 lines the Mg(2+) pocket.

It belongs to the class-II aminoacyl-tRNA synthetase family. Phe-tRNA synthetase alpha subunit type 1 subfamily. As to quaternary structure, tetramer of two alpha and two beta subunits. It depends on Mg(2+) as a cofactor.

The protein resides in the cytoplasm. The catalysed reaction is tRNA(Phe) + L-phenylalanine + ATP = L-phenylalanyl-tRNA(Phe) + AMP + diphosphate + H(+). The sequence is that of Phenylalanine--tRNA ligase alpha subunit from Paracidovorax citrulli (strain AAC00-1) (Acidovorax citrulli).